The chain runs to 275 residues: NAD kinase (275 aa).

D68 functions as the Proton acceptor in the catalytic mechanism. NAD(+)-binding positions include 68–69 (DG), R73, 136–137 (NE), K147, R164, D166, 177–182 (TAYAMS), A201, and Q236.

The protein belongs to the NAD kinase family. It depends on a divalent metal cation as a cofactor.

It localises to the cytoplasm. The catalysed reaction is NAD(+) + ATP = ADP + NADP(+) + H(+). In terms of biological role, involved in the regulation of the intracellular balance of NAD and NADP, and is a key enzyme in the biosynthesis of NADP. Catalyzes specifically the phosphorylation on 2'-hydroxyl of the adenosine moiety of NAD to yield NADP. The sequence is that of NAD kinase from Methanosarcina barkeri (strain Fusaro / DSM 804).